The sequence spans 224 residues: LexA repressor (224 aa).

Positions 29-49 (RAEIARALGFRSPNAAEDHLK) form a DNA-binding region, H-T-H motif. Active-site for autocatalytic cleavage activity residues include Ser-142 and Lys-179.

This sequence belongs to the peptidase S24 family. In terms of assembly, homodimer.

It catalyses the reaction Hydrolysis of Ala-|-Gly bond in repressor LexA.. Functionally, represses a number of genes involved in the response to DNA damage (SOS response), including recA and lexA. In the presence of single-stranded DNA, RecA interacts with LexA causing an autocatalytic cleavage which disrupts the DNA-binding part of LexA, leading to derepression of the SOS regulon and eventually DNA repair. This chain is LexA repressor, found in Bordetella petrii (strain ATCC BAA-461 / DSM 12804 / CCUG 43448).